We begin with the raw amino-acid sequence, 101 residues long: DET1- and DDB1-associated protein 1 (101 aa).

A disordered region spans residues 67-101 (NAAKKRDQDQLEIGETSAPPRKIARTDSQEMNEDT).

This sequence belongs to the DDA1 family. Component of numerous DCX (DDB1-CUL4-X-box) E3 ubiquitin-protein ligase complexes which consist of a core of DDB1, cullin-4 (CUL4A or CUL4B), DDA1 and RBX1.

It functions in the pathway protein modification; protein ubiquitination. Functions as a component of numerous distinct DCX (DDB1-CUL4-X-box) E3 ubiquitin-protein ligase complexes which mediate the ubiquitination and subsequent proteasomal degradation of target proteins. In the DCX complexes, acts as a scaffolding subunit required to stabilize the complex. The chain is DET1- and DDB1-associated protein 1 from Xenopus laevis (African clawed frog).